Reading from the N-terminus, the 366-residue chain is 4-hydroxy-3-methylbut-2-en-1-yl diphosphate synthase (flavodoxin) (366 aa).

Residues Cys270, Cys273, Cys305, and Glu312 each coordinate [4Fe-4S] cluster.

The protein belongs to the IspG family. It depends on [4Fe-4S] cluster as a cofactor.

It carries out the reaction (2E)-4-hydroxy-3-methylbut-2-enyl diphosphate + oxidized [flavodoxin] + H2O + 2 H(+) = 2-C-methyl-D-erythritol 2,4-cyclic diphosphate + reduced [flavodoxin]. It participates in isoprenoid biosynthesis; isopentenyl diphosphate biosynthesis via DXP pathway; isopentenyl diphosphate from 1-deoxy-D-xylulose 5-phosphate: step 5/6. Its function is as follows. Converts 2C-methyl-D-erythritol 2,4-cyclodiphosphate (ME-2,4cPP) into 1-hydroxy-2-methyl-2-(E)-butenyl 4-diphosphate. The sequence is that of 4-hydroxy-3-methylbut-2-en-1-yl diphosphate synthase (flavodoxin) from Wigglesworthia glossinidia brevipalpis.